We begin with the raw amino-acid sequence, 499 residues long: Phenylalanine--tRNA ligase alpha subunit (499 aa).

L-phenylalanine contacts are provided by residues Thr330, 372–374 (QVE), and Tyr412. Residue Glu414 participates in Mg(2+) binding. Phe438 provides a ligand contact to L-phenylalanine.

The protein belongs to the class-II aminoacyl-tRNA synthetase family. Phe-tRNA synthetase alpha subunit type 2 subfamily. Tetramer of two alpha and two beta subunits. Mg(2+) is required as a cofactor.

Its subcellular location is the cytoplasm. The catalysed reaction is tRNA(Phe) + L-phenylalanine + ATP = L-phenylalanyl-tRNA(Phe) + AMP + diphosphate + H(+). The chain is Phenylalanine--tRNA ligase alpha subunit (frs2) from Schizosaccharomyces pombe (strain 972 / ATCC 24843) (Fission yeast).